A 941-amino-acid polypeptide reads, in one-letter code: PHD finger protein 14 (941 aa).

The segment at 22 to 295 (DYDSSDDSDF…LSQSKSNEDS (274 aa)) is disordered. Serine 26 and serine 29 each carry phosphoserine. The segment covering 36–47 (ASDSEGSGNGSE) has biased composition (low complexity). Over residues 60-72 (DSEENILEEELNE) the composition is skewed to acidic residues. Composition is skewed to basic and acidic residues over residues 74-85 (IQVKEEQLKNST), 94-109 (QLIK…NGER), and 116-132 (KEKE…EKAT). Residue serine 84 is modified to Phosphoserine. The span at 133–166 (VSDSAAASAAGTTPATSPPAVTSPSVPTTTTTTT) shows a compositional bias: low complexity. At serine 189 the chain carries Phosphoserine. Acidic residues-rich tracts occupy residues 194-205 (NAMDDYDSEDDN) and 226-249 (DGDN…EGND). Residue tyrosine 199 is modified to Phosphotyrosine. The residue at position 201 (serine 201) is a Phosphoserine. At threonine 280 the chain carries Phosphothreonine. Residues 281–290 (NDSLTLSQSK) are compositionally biased toward polar residues. Residues serine 283, serine 287, serine 291, serine 295, and serine 301 each carry the phosphoserine modification. A PHD-type 1 zinc finger spans residues 312–373 (ILICCVCLGD…PWFCDACKCG (62 aa)). 6 residues coordinate Zn(2+): cysteine 315, cysteine 318, cysteine 332, cysteine 335, histidine 340, and cysteine 343. Serine 352 carries the phosphoserine modification. Zn(2+) is bound by residues cysteine 367, cysteine 370, cysteine 378, cysteine 381, histidine 398, cysteine 401, cysteine 434, cysteine 437, cysteine 451, cysteine 456, histidine 461, cysteine 464, cysteine 488, and histidine 491. Residues 375–408 (SPSCELCPNQDGIFKETDAGRWVHIVCALYVPGV) form a C2HC pre-PHD-type zinc finger. A PHD-type 2 zinc finger spans residues 432–492 (KECSFCEDPR…PFFAYCKQHA (61 aa)). Serine 523 carries the phosphoserine modification. Residues 623–671 (MIQIQENMAEQKNIKDKLENEQEKLHVEYNKLCESLEELQNLNGKLRSE) adopt a coiled-coil conformation. A PHD-type 3 zinc finger spans residues 718 to 772 (LYSCGICKKNHDQHLLLLCDTCKLHYHLGCLDPPLTRMPRKTKNSYWQCSECDQA). Cysteine 721, cysteine 724, cysteine 736, cysteine 739, histidine 744, cysteine 747, cysteine 766, and cysteine 769 together coordinate Zn(2+). A phosphoserine mark is found at serine 774, serine 775, and serine 828. Residues 804-855 (VPQDVPPEPKKIPIRNTRTRGRKRSFVPEEEKHEERVPRERRQRQSVLQKKP) are disordered. Residues 829–843 (FVPEEEKHEERVPRE) are compositionally biased toward basic and acidic residues. The PHD-type 4 zinc-finger motif lies at 861-914 (RTECSTCKGTGDNENLVRCDECRLCYHFGCLDPPLKKSPKQTGYGWICQECDSS). Zn(2+) is bound by residues cysteine 864, cysteine 867, cysteine 879, cysteine 882, histidine 887, cysteine 890, cysteine 908, and cysteine 911. Positions 912-941 (DSSSSKEDENEAEKKNASQELSMEQKTPKK) are disordered. The segment covering 915–928 (SSKEDENEAEKKNA) has biased composition (basic and acidic residues). A compositionally biased stretch (polar residues) spans 930–941 (QELSMEQKTPKK).

High levels detected in testis, lung and spleen and low levels in muscle, heart, intestine and kidney (at protein level). Widely expressed in adult with increased levels in intestine, colon and lung.

The protein resides in the nucleus. Its subcellular location is the chromosome. It localises to the cytoplasm. Histone-binding protein. Binds preferentially to unmodified histone H3 but can also bind to a lesser extent to histone H3 trimethylated at 'Lys-9' (H3K9me3) as well as to histone H3 monomethylated at 'Lys-27' (H3K27ac) and trimethylated at 'Lys-27' (H3K27me3). Represses PDGFRA expression, thus playing a role in regulation of mesenchymal cell proliferation. Suppresses the expression of CDKN1A/p21 by reducing the level of trimethylation of histone H3 'Lys-4', leading to enhanced proliferation of germinal center B cells. The chain is PHD finger protein 14 (Phf14) from Mus musculus (Mouse).